The following is a 114-amino-acid chain: NLP effector protein 1 (114 aa).

It belongs to the Necrosis inducing protein (NPP1) family.

It is found in the secreted. It localises to the host cytoplasm. In terms of biological role, probable secreted effector that may act as a pathogen-associated molecular pattern (PAMP) recognized by the plant immune system. Seems not to induce necrosis, neither in several susceptible or resistant Vitis species nor in the dicot model plant Nicotiana benthamiana. In Plasmopara viticola (Downy mildew of grapevine), this protein is NLP effector protein 1.